A 513-amino-acid chain; its full sequence is ATP synthase subunit alpha (513 aa).

169-176 (GDRQTGKT) serves as a coordination point for ATP.

This sequence belongs to the ATPase alpha/beta chains family. As to quaternary structure, F-type ATPases have 2 components, CF(1) - the catalytic core - and CF(0) - the membrane proton channel. CF(1) has five subunits: alpha(3), beta(3), gamma(1), delta(1), epsilon(1). CF(0) has three main subunits: a(1), b(2) and c(9-12). The alpha and beta chains form an alternating ring which encloses part of the gamma chain. CF(1) is attached to CF(0) by a central stalk formed by the gamma and epsilon chains, while a peripheral stalk is formed by the delta and b chains.

Its subcellular location is the cell inner membrane. The enzyme catalyses ATP + H2O + 4 H(+)(in) = ADP + phosphate + 5 H(+)(out). Produces ATP from ADP in the presence of a proton gradient across the membrane. The alpha chain is a regulatory subunit. This is ATP synthase subunit alpha from Halorhodospira halophila (strain DSM 244 / SL1) (Ectothiorhodospira halophila (strain DSM 244 / SL1)).